The chain runs to 203 residues: LexA repressor (203 aa).

Positions 28-48 form a DNA-binding region, H-T-H motif; that stretch reads RAEIASQLGFRSPNAAEEHLK. Catalysis depends on for autocatalytic cleavage activity residues S120 and K157.

Belongs to the peptidase S24 family. As to quaternary structure, homodimer.

It carries out the reaction Hydrolysis of Ala-|-Gly bond in repressor LexA.. In terms of biological role, represses a number of genes involved in the response to DNA damage (SOS response), including recA and lexA. Binds to the 16 bp palindromic sequence 5'-CTGTATATATATACAG-3'. In the presence of single-stranded DNA, RecA interacts with LexA causing an autocatalytic cleavage which disrupts the DNA-binding part of LexA, leading to derepression of the SOS regulon and eventually DNA repair. In Proteus mirabilis (strain HI4320), this protein is LexA repressor.